The primary structure comprises 414 residues: tRNA N6-adenosine threonylcarbamoyltransferase, mitochondrial (414 aa).

A mitochondrion-targeting transit peptide spans 1 to 29 (MLMLRRTAGAIPKPPKSKVYGFLRRFSVH). An N6-acetyllysine mark is found at Lys74 and Lys140. The a divalent metal cation site is built by His147 and His151. Residues 169–173 (LISGG) and Asp202 each bind substrate. The residue at position 203 (Lys203) is an N6-acetyllysine. Substrate is bound by residues Gly222 and Glu226. An N6-acetyllysine mark is found at Lys230 and Lys299. Substrate is bound by residues 329–330 (SN) and Thr357. Asp358 is an a divalent metal cation binding site.

This sequence belongs to the KAE1 / TsaD family. Monomer. A divalent metal cation serves as cofactor.

The protein localises to the mitochondrion. It catalyses the reaction L-threonylcarbamoyladenylate + adenosine(37) in tRNA = N(6)-L-threonylcarbamoyladenosine(37) in tRNA + AMP + H(+). Required for the formation of a threonylcarbamoyl group on adenosine at position 37 (t(6)A37) in mitochondrial tRNAs that read codons beginning with adenine. Probably involved in the transfer of the threonylcarbamoyl moiety of threonylcarbamoyl-AMP (TC-AMP) to the N6 group of A37. Involved in mitochondrial genome maintenance. The protein is tRNA N6-adenosine threonylcarbamoyltransferase, mitochondrial of Mus musculus (Mouse).